The primary structure comprises 112 residues: uncharacterized protein (112 aa).

Residues 1 to 25 form the signal peptide; sequence MKGTKLAVVVGMTVAAVSLAAPAQA.

This is an uncharacterized protein from Mycobacterium tuberculosis (strain CDC 1551 / Oshkosh).